We begin with the raw amino-acid sequence, 399 residues long: Dual-specificity RNA methyltransferase RlmN (399 aa).

The active-site Proton acceptor is Glu121. One can recognise a Radical SAM core domain in the interval 127–376 (DVDRGTLCVS…VRTPRGRDIL (250 aa)). Cysteines 134 and 379 form a disulfide. [4Fe-4S] cluster contacts are provided by Cys141, Cys145, and Cys148. S-adenosyl-L-methionine-binding positions include 205–206 (GE), Ser237, 259–261 (SLH), and Asn336. Cys379 functions as the S-methylcysteine intermediate in the catalytic mechanism.

The protein belongs to the radical SAM superfamily. RlmN family. [4Fe-4S] cluster is required as a cofactor.

It localises to the cytoplasm. The enzyme catalyses adenosine(2503) in 23S rRNA + 2 reduced [2Fe-2S]-[ferredoxin] + 2 S-adenosyl-L-methionine = 2-methyladenosine(2503) in 23S rRNA + 5'-deoxyadenosine + L-methionine + 2 oxidized [2Fe-2S]-[ferredoxin] + S-adenosyl-L-homocysteine. It catalyses the reaction adenosine(37) in tRNA + 2 reduced [2Fe-2S]-[ferredoxin] + 2 S-adenosyl-L-methionine = 2-methyladenosine(37) in tRNA + 5'-deoxyadenosine + L-methionine + 2 oxidized [2Fe-2S]-[ferredoxin] + S-adenosyl-L-homocysteine. Functionally, specifically methylates position 2 of adenine 2503 in 23S rRNA and position 2 of adenine 37 in tRNAs. m2A2503 modification seems to play a crucial role in the proofreading step occurring at the peptidyl transferase center and thus would serve to optimize ribosomal fidelity. The polypeptide is Dual-specificity RNA methyltransferase RlmN (Methylocella silvestris (strain DSM 15510 / CIP 108128 / LMG 27833 / NCIMB 13906 / BL2)).